Here is a 201-residue protein sequence, read N- to C-terminus: Snake venom metalloproteinase trimerelysin-2 (201 aa).

Q1 bears the Pyrrolidone carboxylic acid mark. The region spanning R6–P201 is the Peptidase M12B domain. N72 carries N-linked (GlcNAc...) asparagine glycosylation. Intrachain disulfides connect C117–C196, C158–C180, and C160–C163. H142 is a Zn(2+) binding site. E143 is a catalytic residue. Zn(2+) contacts are provided by H146 and H152.

It belongs to the venom metalloproteinase (M12B) family. P-I subfamily. In terms of assembly, monomer. Zn(2+) is required as a cofactor. Expressed by the venom gland.

The protein resides in the secreted. The catalysed reaction is Cleavage of 3-Asn-|-Gln-4, 10-His-|-Leu-11 and 14-Ala-|-Leu-15 in the insulin B chain, and the bond Z-Gly-Pro-|-Leu-Gly-Pro in a small molecule substrate of microbial collagenase.. Major venom non-hemorrhagic metalloproteinase. This Protobothrops flavoviridis (Habu) protein is Snake venom metalloproteinase trimerelysin-2.